The sequence spans 208 residues: Outer-membrane lipoprotein carrier protein (208 aa).

The signal sequence occupies residues 1–25 (MKKLFSAKLFSALVLSFSLFSTAHA).

This sequence belongs to the LolA family. Monomer.

The protein resides in the periplasm. Functionally, participates in the translocation of lipoproteins from the inner membrane to the outer membrane. Only forms a complex with a lipoprotein if the residue after the N-terminal Cys is not an aspartate (The Asp acts as a targeting signal to indicate that the lipoprotein should stay in the inner membrane). The sequence is that of Outer-membrane lipoprotein carrier protein from Vibrio campbellii (strain ATCC BAA-1116).